Consider the following 141-residue polypeptide: 3-hydroxyacyl-[acyl-carrier-protein] dehydratase FabZ (141 aa).

Histidine 49 is an active-site residue.

The protein belongs to the thioester dehydratase family. FabZ subfamily.

The protein resides in the cytoplasm. The catalysed reaction is a (3R)-hydroxyacyl-[ACP] = a (2E)-enoyl-[ACP] + H2O. Functionally, involved in unsaturated fatty acids biosynthesis. Catalyzes the dehydration of short chain beta-hydroxyacyl-ACPs and long chain saturated and unsaturated beta-hydroxyacyl-ACPs. In Enterococcus faecalis (strain ATCC 700802 / V583), this protein is 3-hydroxyacyl-[acyl-carrier-protein] dehydratase FabZ (fabZ2).